The chain runs to 371 residues: Probable RNA 3'-terminal phosphate cyclase-like protein (371 aa).

The protein belongs to the RNA 3'-terminal cyclase family. Type 2 subfamily. Part of the small subunit (SSU) processome, composed of more than 70 proteins and the RNA chaperone small nucleolar RNA (snoRNA) U3.

The protein resides in the nucleus. It localises to the nucleolus. In terms of biological role, part of the small subunit (SSU) processome, first precursor of the small eukaryotic ribosomal subunit. During the assembly of the SSU processome in the nucleolus, many ribosome biogenesis factors, an RNA chaperone and ribosomal proteins associate with the nascent pre-rRNA and work in concert to generate RNA folding, modifications, rearrangements and cleavage as well as targeted degradation of pre-ribosomal RNA by the RNA exosome. Does not have cyclase activity. This chain is Probable RNA 3'-terminal phosphate cyclase-like protein (rcl1), found in Dictyostelium discoideum (Social amoeba).